Consider the following 354-residue polypeptide: Protein-arginine kinase (354 aa).

Residues 24–254 enclose the Phosphagen kinase C-terminal domain; that stretch reads IVLSSRIRLA…QQIIQQEKMA (231 aa). Residues 27-31, His-92, Arg-125, 176-180, and 207-212 contribute to the ATP site; these read SSRIR, RASVM, and RGIYGE. The RDXXRA motif of the pArg binding pocket involved in allosteric regulation motif lies at 337-342; sequence RDYRRA.

Belongs to the ATP:guanido phosphotransferase family.

The enzyme catalyses L-arginyl-[protein] + ATP = N(omega)-phospho-L-arginyl-[protein] + ADP + H(+). Its activity is regulated as follows. Appears to be allosterically activated by the binding of pArg-containing polypeptides to the pArg-binding pocket localized in the C-terminal domain of McsB. Functionally, catalyzes the specific phosphorylation of arginine residues in a large number of proteins. Is part of the bacterial stress response system. Protein arginine phosphorylation has a physiologically important role and is involved in the regulation of many critical cellular processes, such as protein homeostasis, motility, competence, and stringent and stress responses, by regulating gene expression and protein activity. The protein is Protein-arginine kinase of Bacillus cereus (strain ATCC 10987 / NRS 248).